The sequence spans 235 residues: uncharacterized protein (235 aa).

This is an uncharacterized protein from Shigella flexneri.